The primary structure comprises 65 residues: Lantibiotic lacticin 3147 A2 (65 aa).

A propeptide spanning residues 1–36 (MKEKNMKKNDTIELQLGKYLEDDMIELAEGDESHGG) is cleaved from the precursor. Threonine 37 is subject to 2-oxobutanoic acid. Residues threonine 38 and threonine 41 each carry the 2,3-didehydrobutyrine modification. Residues serine 45 and serine 48 each carry the 2,3-didehydroalanine (Ser) modification. The lanthionine (Ser-Cys) cross-link spans 52–56 (STNTC). Cross-links (beta-methyllanthionine (Thr-Cys)) lie at residues 58 to 61 (TTKC) and 62 to 65 (TRAC).

In terms of processing, maturation of lantibiotics involves the enzymatic conversion of Thr, and Ser into dehydrated AA and the formation of thioether bonds with cysteine. This is followed by membrane translocation and cleavage of the modified precursor. Post-translationally, it is not established whether the 2,3-didehydrobutyrines are the E- or Z-isomers. In the NMR model they were assumed to be the Z-isomer.

The protein resides in the secreted. Its function is as follows. Lanthionine-containing peptide antibiotic (lantibiotic) active on Gram-positive bacteria. The bactericidal activity of lantibiotics is based on depolarization of energized bacterial cytoplasmic membranes, initiated by the formation of aqueous transmembrane pores. When present individually lacticin 3147 A2 exhibits weak activity towards L.lactis strain AM2 and L.lactis strain HP, and no activity towards L.lactis strain IFPL359, but when combined with lacticin 3147 A1 it displays strong activity towards all three strains. This Lactococcus lactis subsp. lactis (Streptococcus lactis) protein is Lantibiotic lacticin 3147 A2.